The chain runs to 338 residues: UDP-3-O-acylglucosamine N-acyltransferase (338 aa).

Catalysis depends on His251, which acts as the Proton acceptor.

This sequence belongs to the transferase hexapeptide repeat family. LpxD subfamily. In terms of assembly, homotrimer.

The catalysed reaction is a UDP-3-O-[(3R)-3-hydroxyacyl]-alpha-D-glucosamine + a (3R)-hydroxyacyl-[ACP] = a UDP-2-N,3-O-bis[(3R)-3-hydroxyacyl]-alpha-D-glucosamine + holo-[ACP] + H(+). It participates in bacterial outer membrane biogenesis; LPS lipid A biosynthesis. In terms of biological role, catalyzes the N-acylation of UDP-3-O-acylglucosamine using 3-hydroxyacyl-ACP as the acyl donor. Is involved in the biosynthesis of lipid A, a phosphorylated glycolipid that anchors the lipopolysaccharide to the outer membrane of the cell. The sequence is that of UDP-3-O-acylglucosamine N-acyltransferase from Psychrobacter cryohalolentis (strain ATCC BAA-1226 / DSM 17306 / VKM B-2378 / K5).